Reading from the N-terminus, the 778-residue chain is Serine/threonine-protein kinase BRSK1 (778 aa).

The segment covering 1 to 12 has biased composition (gly residues); sequence MSSGSKEGGGGS. Residues 1-29 are disordered; that stretch reads MSSGSKEGGGGSPAYHLPHPHPHPPQHAQ. One can recognise a Protein kinase domain in the interval 34–285; sequence YRLEKTLGKG…LEQIQKHPWY (252 aa). ATP-binding positions include 40-48 and Lys63; that span reads LGKGQTGLV. Asp156 serves as the catalytic Proton acceptor. Thr189 bears the Phosphothreonine; by LKB1 mark. Phosphoserine is present on Ser193. Residues 314–356 form the UBA domain; the sequence is ELDPDVLESMASLGCFRDRERLHRELRSEEENQEKMIYYLLLD. Residues 362-383 show a composition bias toward basic and acidic residues; sequence PSCEDQDLPPRNDVDPPRKRVD. Residues 362-548 are disordered; it reads PSCEDQDLPP…SPGGGVGGAA (187 aa). Ser399, Ser443, Ser447, and Ser450 each carry phosphoserine. Low complexity predominate over residues 430 to 457; that stretch reads SRSVSGASTGLSSSPLSSPRSPVFSFSP. Omega-N-methylarginine occurs at positions 466, 481, 484, and 498. The segment covering 491-508 has biased composition (pro residues); that stretch reads QPPPPSARSTPLPGPPGS. Residue Ser508 is modified to Phosphoserine. Residues 509–533 show a composition bias toward low complexity; that stretch reads PRSSGGTPLHSPLHTPRASPTGTPG. Residue Arg525 is modified to Omega-N-methylarginine. Thr529 and Thr535 each carry phosphothreonine. Arg550 bears the Omega-N-methylarginine mark. Thr583 bears the Phosphothreonine mark. A phosphoserine mark is found at Ser586, Ser587, and Ser601. Residues 719 to 778 form a disordered region; the sequence is QPSVQALADEKNGAQTRPAGTPPRSLQPPPGRPDPDLSSSPRRGPSKDKKLLATNGTPLP.

Belongs to the protein kinase superfamily. CAMK Ser/Thr protein kinase family. SNF1 subfamily. It depends on Mg(2+) as a cofactor. Post-translationally, phosphorylated at Thr-189 by STK11/LKB1 in complex with STE20-related adapter-alpha (STRADA) pseudo kinase and CAB39. Not phosphorylated at Thr-189 by CaMKK2. In contrast, it is phosphorylated and activated by CaMKK1. May be inactivated via dephosphorylation of Thr-189 by PP2C. May be autophosphorylated. Mainly present in brain. Present in presynaptic nerve terminals (at protein level).

The protein resides in the cytoplasm. Its subcellular location is the nucleus. It is found in the cytoskeleton. The protein localises to the microtubule organizing center. It localises to the centrosome. The protein resides in the synapse. Its subcellular location is the presynaptic active zone. It is found in the cytoplasmic vesicle. The protein localises to the secretory vesicle. It localises to the synaptic vesicle. The enzyme catalyses L-seryl-[protein] + ATP = O-phospho-L-seryl-[protein] + ADP + H(+). It carries out the reaction L-threonyl-[protein] + ATP = O-phospho-L-threonyl-[protein] + ADP + H(+). The catalysed reaction is L-seryl-[tau protein] + ATP = O-phospho-L-seryl-[tau protein] + ADP + H(+). It catalyses the reaction L-threonyl-[tau protein] + ATP = O-phospho-L-threonyl-[tau protein] + ADP + H(+). Its activity is regulated as follows. Activated by phosphorylation on Thr-189 by STK11/LKB1. Functionally, serine/threonine-protein kinase that plays a key role in polarization of neurons and centrosome duplication. Phosphorylates CDC25B, CDC25C, MAPT/TAU, RIMS1, TUBG1, TUBG2 and WEE1. Following phosphorylation and activation by STK11/LKB1, acts as a key regulator of polarization of cortical neurons, probably by mediating phosphorylation of microtubule-associated proteins such as MAPT/TAU at 'Thr-523' and 'Ser-573'. Also regulates neuron polarization by mediating phosphorylation of WEE1 at 'Ser-642' in postmitotic neurons, leading to down-regulate WEE1 activity in polarized neurons. Also acts as a positive regulator of centrosome duplication by mediating phosphorylation of gamma-tubulin (TUBG1 and TUBG2) at 'Ser-131', leading to translocation of gamma-tubulin and its associated proteins to the centrosome. Involved in the UV-induced DNA damage checkpoint response, probably by inhibiting CDK1 activity through phosphorylation and activation of WEE1, and inhibition of CDC25B and CDC25C. In neurons, localizes to synaptic vesicles and plays a role in neurotransmitter release, possibly by phosphorylating RIMS1. The chain is Serine/threonine-protein kinase BRSK1 (Brsk1) from Rattus norvegicus (Rat).